A 92-amino-acid polypeptide reads, in one-letter code: Small ribosomal subunit protein uS19 (92 aa).

This sequence belongs to the universal ribosomal protein uS19 family.

Its function is as follows. Protein S19 forms a complex with S13 that binds strongly to the 16S ribosomal RNA. This is Small ribosomal subunit protein uS19 from Vibrio parahaemolyticus serotype O3:K6 (strain RIMD 2210633).